Reading from the N-terminus, the 180-residue chain is Large ribosomal subunit protein uL5 (180 aa).

This sequence belongs to the universal ribosomal protein uL5 family. In terms of assembly, part of the 50S ribosomal subunit; part of the 5S rRNA/L5/L18/L25 subcomplex. Contacts the 5S rRNA and the P site tRNA. Forms a bridge to the 30S subunit in the 70S ribosome.

In terms of biological role, this is one of the proteins that bind and probably mediate the attachment of the 5S RNA into the large ribosomal subunit, where it forms part of the central protuberance. In the 70S ribosome it contacts protein S13 of the 30S subunit (bridge B1b), connecting the 2 subunits; this bridge is implicated in subunit movement. Contacts the P site tRNA; the 5S rRNA and some of its associated proteins might help stabilize positioning of ribosome-bound tRNAs. This is Large ribosomal subunit protein uL5 from Cupriavidus necator (strain ATCC 17699 / DSM 428 / KCTC 22496 / NCIMB 10442 / H16 / Stanier 337) (Ralstonia eutropha).